The chain runs to 130 residues: MLFIYLIVTFFTKMDSVSRIKAFFIMLLTLADQPLTYKIKISQCNDMIINVPYNECFPIYDDCVFGSVLIFQKSDSSKYQVNLYPNINCDENGIIPSKIPYNESGLKITDPLAFYLMFLIIITILLIMIL.

N102 is a glycosylation site (N-linked (GlcNAc...) asparagine). A helical transmembrane segment spans residues 110–130 (DPLAFYLMFLIIITILLIMIL).

The protein localises to the membrane. This is an uncharacterized protein from Dictyostelium discoideum (Social amoeba).